A 424-amino-acid polypeptide reads, in one-letter code: Testican-2 (424 aa).

The signal sequence occupies residues 1-22 (MRAPGCGRLVLPLLLLAAAALA). At Ser-72 the chain carries Phosphoserine; by FAM20C. 5 disulfides stabilise this stretch: Cys-90–Cys-101, Cys-95–Cys-111, Cys-136–Cys-166, Cys-139–Cys-159, and Cys-148–Cys-180. A Kazal-like domain is found at 130-182 (GNKDSICKPCHMAQLASVCGSDGHTYSSVCKLEQQACLSSKQLAVRCEGPCPC). N-linked (GlcNAc...) asparagine glycosylation occurs at Asn-225. Residues 310-376 (KPPCLAELER…GTRTHGSPDC (67 aa)) enclose the Thyroglobulin type-1 domain. 3 cysteine pairs are disulfide-bonded: Cys-313–Cys-337, Cys-348–Cys-355, and Cys-357–Cys-376. O-linked (Xyl...) (glycosaminoglycan) serine glycosylation is found at Ser-383 and Ser-388. Residues 387–424 (GSGVGWEDEEEKETEEAGEEAEEEEGEAGEADDGGYIW) form a disordered region. Residues 392–424 (WEDEEEKETEEAGEEAEEEEGEAGEADDGGYIW) are compositionally biased toward acidic residues.

Contains chondroitin sulfate and heparan sulfate O-linked oligosaccharides. In terms of tissue distribution, highly expressed in brain. Also found in lung and testis.

It localises to the secreted. The protein localises to the extracellular space. The protein resides in the extracellular matrix. Functionally, may participate in diverse steps of neurogenesis. Binds calcium. The sequence is that of Testican-2 (SPOCK2) from Homo sapiens (Human).